The sequence spans 56 residues: Cytochrome b-c1 complex subunit 10 (56 aa).

The Mitochondrial matrix segment spans residues 1–12 (MLTRFLGPRYRQ). The helical transmembrane segment at 13–35 (LARNWVPTASLWGAVGAVGLVWA) threads the bilayer. The Mitochondrial intermembrane portion of the chain corresponds to 36–56 (TDWRLILDWVPYINGKFKKDD).

The protein belongs to the UQCR11/QCR10 family. Component of the ubiquinol-cytochrome c oxidoreductase (cytochrome b-c1 complex, complex III, CIII), a multisubunit enzyme composed of 11 subunits. The complex is composed of 3 respiratory subunits cytochrome b, cytochrome c1 and Rieske protein UQCRFS1, 2 core protein subunits UQCRC1/QCR1 and UQCRC2/QCR2, and 6 low-molecular weight protein subunits UQCRH/QCR6, UQCRB/QCR7, UQCRQ/QCR8, UQCR10/QCR9, UQCR11/QCR10 and subunit 9, the cleavage product of Rieske protein UQCRFS1. The complex exists as an obligatory dimer and forms supercomplexes (SCs) in the inner mitochondrial membrane with NADH-ubiquinone oxidoreductase (complex I, CI) and cytochrome c oxidase (complex IV, CIV), resulting in different assemblies (supercomplex SCI(1)III(2)IV(1) and megacomplex MCI(2)III(2)IV(2)).

The protein localises to the mitochondrion inner membrane. Its function is as follows. Component of the ubiquinol-cytochrome c oxidoreductase, a multisubunit transmembrane complex that is part of the mitochondrial electron transport chain which drives oxidative phosphorylation. The respiratory chain contains 3 multisubunit complexes succinate dehydrogenase (complex II, CII), ubiquinol-cytochrome c oxidoreductase (cytochrome b-c1 complex, complex III, CIII) and cytochrome c oxidase (complex IV, CIV), that cooperate to transfer electrons derived from NADH and succinate to molecular oxygen, creating an electrochemical gradient over the inner membrane that drives transmembrane transport and the ATP synthase. The cytochrome b-c1 complex catalyzes electron transfer from ubiquinol to cytochrome c, linking this redox reaction to translocation of protons across the mitochondrial inner membrane, with protons being carried across the membrane as hydrogens on the quinol. In the process called Q cycle, 2 protons are consumed from the matrix, 4 protons are released into the intermembrane space and 2 electrons are passed to cytochrome c. QCR10 has a role in CIII assembly and RIP1 stability. The polypeptide is Cytochrome b-c1 complex subunit 10 (UQCR11) (Bos taurus (Bovine)).